The sequence spans 236 residues: uncharacterized protein (236 aa).

7 helical membrane passes run 32 to 52, 61 to 81, 90 to 110, 115 to 135, 144 to 164, 167 to 187, and 208 to 228; these read MALALLLTGVAAITTISVEPI, FGTIIMFAPLGIALYFFMGFG, ILFWVYAGLTGMSLSYLALIY, IARTFFICSSVFGAMSLYGYS, GSFFAMGLIGLIIASLVNLFL, SSLSFATSLIGIVVFMGLIAW, and LSIMAAFTLYLDFINLFLYLM.

Belongs to the BI1 family.

The protein localises to the cell membrane. This is an uncharacterized protein from Rickettsia prowazekii (strain Madrid E).